Reading from the N-terminus, the 83-residue chain is Retinal cone rhodopsin-sensitive cGMP 3',5'-cyclic phosphodiesterase subunit gamma (83 aa).

Positions 1–51 (MSDSPCLSPPAPSQGPTTPRKGPPKFKQRQTRQFKSKPPKKGVKGFGDDIP) are disordered. Basic residues predominate over residues 22-43 (GPPKFKQRQTRQFKSKPPKKGV).

It belongs to the rod/cone cGMP-PDE gamma subunit family. As to quaternary structure, tetramer composed of two catalytic chains (alpha and beta), and two inhibitory chains (gamma).

It carries out the reaction 3',5'-cyclic GMP + H2O = GMP + H(+). Its function is as follows. Participates in processes of transmission and amplification of the visual signal. cGMP-PDEs are the effector molecules in G-protein-mediated phototransduction in vertebrate rods and cones. This Rattus norvegicus (Rat) protein is Retinal cone rhodopsin-sensitive cGMP 3',5'-cyclic phosphodiesterase subunit gamma (Pde6h).